Reading from the N-terminus, the 67-residue chain is MMSKLGVLLTICLLLFPLTAVQLDGDQPADLPALRTQDISTDHSPWFDPVKRCCSRYCYICIPCCPN.

Residues 1-20 (MMSKLGVLLTICLLLFPLTA) form the signal peptide. A propeptide spanning residues 21-50 (VQLDGDQPADLPALRTQDISTDHSPWFDPV) is cleaved from the precursor. Intrachain disulfides connect Cys53/Cys65, Cys54/Cys61, and Cys58/Cys64. Pro63 bears the 4-hydroxyproline mark.

This sequence belongs to the conotoxin M superfamily. As to expression, expressed by the venom duct.

The protein resides in the secreted. The sequence is that of Conotoxin TsMMSK-011 from Conus tessulatus (Tessellate cone).